Consider the following 157-residue polypeptide: Transcription elongation factor GreA (157 aa).

Residues 14–37 (LRKELERLLKRRPLITEAIAEARE) adopt a coiled-coil conformation.

Belongs to the GreA/GreB family.

Its function is as follows. Necessary for efficient RNA polymerase transcription elongation past template-encoded arresting sites. The arresting sites in DNA have the property of trapping a certain fraction of elongating RNA polymerases that pass through, resulting in locked ternary complexes. Cleavage of the nascent transcript by cleavage factors such as GreA or GreB allows the resumption of elongation from the new 3'terminus. GreA releases sequences of 2 to 3 nucleotides. The sequence is that of Transcription elongation factor GreA from Vibrio vulnificus (strain CMCP6).